We begin with the raw amino-acid sequence, 358 residues long: Chondroadherin (358 aa).

The signal sequence occupies residues 1–20 (MARALLFSLVFLAILLPALA). In terms of domain architecture, LRRNT spans 21 to 50 (ACPQNCHCHGDLQHVICDKVGLQKIPKVSE). Cysteines 22 and 37 form a disulfide. 10 LRR repeats span residues 51-72 (TTKL…SFRT), 75-96 (NLVS…AFRG), 99-120 (QLIY…AFDD), 123-144 (ELTY…LLSP), 147-168 (NLFI…AFQG), 171-192 (DLRW…SLDD), 195-216 (NLAK…ALSK), 219-240 (VVEE…AFQS), 244-265 (YLET…AFSG), and 268-289 (TLKH…FPFD). Residue S143 is glycosylated (O-linked (GalNAc...) serine). The 49-residue stretch at 299–347 (NPWKCTCQLRGLRRWLEAKASRPDATCSSPAKFKGQRIRDTDALRSCKS) folds into the LRRCT domain. Cystine bridges form between C303/C345 and C305/C325. Positions 322-358 (DATCSSPAKFKGQRIRDTDALRSCKSPTKRSKKAGRH) are disordered. Basic residues predominate over residues 348–358 (PTKRSKKAGRH).

Belongs to the small leucine-rich proteoglycan (SLRP) family. SLRP class IV subfamily. As to quaternary structure, mostly monomeric. Interacts with collagen type II. In terms of tissue distribution, cartilage.

It is found in the secreted. Its subcellular location is the extracellular space. It localises to the extracellular matrix. Functionally, promotes attachment of chondrocytes, fibroblasts, and osteoblasts. This binding is mediated (at least for chondrocytes and fibroblasts) by the integrin alpha(2)beta(1). May play an important role in the regulation of chondrocyte growth and proliferation. The sequence is that of Chondroadherin (Chad) from Mus musculus (Mouse).